A 172-amino-acid chain; its full sequence is Probable metallophosphoesterase MTH_1774 (172 aa).

A divalent metal cation contacts are provided by aspartate 8, histidine 10, aspartate 37, asparagine 59, histidine 85, histidine 113, and histidine 115.

This sequence belongs to the metallophosphoesterase superfamily. YfcE family. It depends on a divalent metal cation as a cofactor.

In Methanothermobacter thermautotrophicus (strain ATCC 29096 / DSM 1053 / JCM 10044 / NBRC 100330 / Delta H) (Methanobacterium thermoautotrophicum), this protein is Probable metallophosphoesterase MTH_1774.